Consider the following 714-residue polypeptide: Polyribonucleotide nucleotidyltransferase (714 aa).

Positions 488 and 494 each coordinate Mg(2+). The KH domain maps to Pro555–Ile614. Residues Gly624–Lys692 form the S1 motif domain.

This sequence belongs to the polyribonucleotide nucleotidyltransferase family. It depends on Mg(2+) as a cofactor.

Its subcellular location is the cytoplasm. The catalysed reaction is RNA(n+1) + phosphate = RNA(n) + a ribonucleoside 5'-diphosphate. Involved in mRNA degradation. Catalyzes the phosphorolysis of single-stranded polyribonucleotides processively in the 3'- to 5'-direction. In Brucella abortus biovar 1 (strain 9-941), this protein is Polyribonucleotide nucleotidyltransferase.